Consider the following 295-residue polypeptide: MDATPNAVELTVDNAWFIAETIGAGTFPWVLAITMPYSDAAQRGAFVDRQRDELTRMGLLSPQGVINPAVADWIKVVCFPDRWLDLRYVGPASADGACELLRGIVALRTGTGKTSNKTGNGVVALRNAQLVTFTAMDIDDPRALVPILGVGLAHRPPARFDEFSLPTRVGARADERLRSGVPLGEVVDYLGIPASARPVVESVFSGPRSYVEIVAGCNRDGRHTTTEVGLSIVDTSAGRVLVSPSRAFDGEWVSTFSPGTPFAIAVAIQTLTACLPDGQWFPGQRVSRDFSTQSS.

This sequence belongs to the EspG family. Interacts specifically with ESX-3-dependent PE/PPE proteins.

The protein localises to the cytoplasm. Its function is as follows. Specific chaperone for cognate PE/PPE proteins. Plays an important role in preventing aggregation of PE/PPE dimers. This is ESX-3 secretion-associated protein EspG3 from Mycobacterium tuberculosis (strain CDC 1551 / Oshkosh).